The primary structure comprises 378 residues: Chaperone protein DnaJ (378 aa).

The 66-residue stretch at 5–70 folds into the J domain; it reads DYYEVLGVAK…QKRAAYDQYG (66 aa). The CR-type zinc-finger motif lies at 138–216; the sequence is GYDTQIRVPS…CHGSGKVKET (79 aa). Residues Cys-151, Cys-154, Cys-168, Cys-171, Cys-190, Cys-193, Cys-204, and Cys-207 each contribute to the Zn(2+) site. 4 CXXCXGXG motif repeats span residues 151–158, 168–175, 190–197, and 204–211; these read CEVCHGSG, CPTCHGQG, CPKCHGTG, and CVHCHGSG.

It belongs to the DnaJ family. Homodimer. Zn(2+) serves as cofactor.

It localises to the cytoplasm. Its function is as follows. Participates actively in the response to hyperosmotic and heat shock by preventing the aggregation of stress-denatured proteins and by disaggregating proteins, also in an autonomous, DnaK-independent fashion. Unfolded proteins bind initially to DnaJ; upon interaction with the DnaJ-bound protein, DnaK hydrolyzes its bound ATP, resulting in the formation of a stable complex. GrpE releases ADP from DnaK; ATP binding to DnaK triggers the release of the substrate protein, thus completing the reaction cycle. Several rounds of ATP-dependent interactions between DnaJ, DnaK and GrpE are required for fully efficient folding. Also involved, together with DnaK and GrpE, in the DNA replication of plasmids through activation of initiation proteins. The polypeptide is Chaperone protein DnaJ (Burkholderia ambifaria (strain MC40-6)).